The chain runs to 71 residues: Defensin-like protein 124 (71 aa).

The signal sequence occupies residues 1 to 25; that stretch reads MSKPTVIVIFMAILVLGMATKETQG. 4 cysteine pairs are disulfide-bonded: cysteine 28–cysteine 71, cysteine 40–cysteine 60, cysteine 45–cysteine 65, and cysteine 49–cysteine 67.

This sequence belongs to the DEFL family.

The protein resides in the secreted. This chain is Defensin-like protein 124 (LCR16), found in Arabidopsis thaliana (Mouse-ear cress).